We begin with the raw amino-acid sequence, 1391 residues long: ESX-5 secretion system protein EccC5 (1391 aa).

A run of 2 helical transmembrane segments spans residues 38–58 (WLIV…AMVF) and 65–85 (FGGI…MMMF). FtsK domains lie at 476–678 (GELL…GAAQ), 858–1052 (QPPW…EDAK), and 1161–1354 (LAPV…DPDE). Residues 499–506 (GTTGSGKS), 876–883 (GAGGSGKT), and 1178–1185 (GRRECGRT) each bind ATP.

As to quaternary structure, part of the ESX-5 / type VII secretion system (T7SS), which is composed of cytosolic and membrane components. The ESX-5 membrane complex is composed of EccB5, EccC5, EccD5 and EccE5.

It is found in the cell inner membrane. Part of the ESX-5 specialized secretion system, which is responsible for the secretion of EsxN and a number of PE_PGRS and PPE proteins, including PPE41. The protein is ESX-5 secretion system protein EccC5 of Mycobacterium tuberculosis (strain CDC 1551 / Oshkosh).